Here is a 193-residue protein sequence, read N- to C-terminus: Protein CURVATURE THYLAKOID 1D, chloroplastic (193 aa).

The transit peptide at methionine 1–arginine 51 directs the protein to the chloroplast. Residues cysteine 52–threonine 117 lie on the Stromal side of the membrane. Residues tyrosine 118–valine 138 form a helical membrane-spanning segment. Residues serine 139–glutamate 142 lie on the Lumenal side of the membrane. The chain crosses the membrane as a helical span at residues alanine 143 to threonine 163. Topologically, residues threonine 164–glutamate 193 are stromal.

Belongs to the CURT family. In terms of assembly, homo- and heterodimers and trimers.

It localises to the plastid. The protein localises to the chloroplast thylakoid membrane. Determines thylakoid architecture by inducing membrane curvature. In Arabidopsis thaliana (Mouse-ear cress), this protein is Protein CURVATURE THYLAKOID 1D, chloroplastic (CURT1D).